Here is a 234-residue protein sequence, read N- to C-terminus: Probable chemoreceptor glutamine deamidase CheD 1 (234 aa).

This sequence belongs to the CheD family.

The enzyme catalyses L-glutaminyl-[protein] + H2O = L-glutamyl-[protein] + NH4(+). In terms of biological role, probably deamidates glutamine residues to glutamate on methyl-accepting chemotaxis receptors (MCPs), playing an important role in chemotaxis. The sequence is that of Probable chemoreceptor glutamine deamidase CheD 1 from Albidiferax ferrireducens (strain ATCC BAA-621 / DSM 15236 / T118) (Rhodoferax ferrireducens).